Here is a 594-residue protein sequence, read N- to C-terminus: Aspartate--tRNA(Asp/Asn) ligase (594 aa).

E175 is an L-aspartate binding site. The tract at residues 199–202 is aspartate; it reads QLFK. R221 is an L-aspartate binding site. Residues 221–223 and Q230 contribute to the ATP site; that span reads RDE. H446 provides a ligand contact to L-aspartate. E492 provides a ligand contact to ATP. R499 provides a ligand contact to L-aspartate. An ATP-binding site is contributed by 544–547; the sequence is GFDR.

It belongs to the class-II aminoacyl-tRNA synthetase family. Type 1 subfamily. In terms of assembly, homodimer.

The protein localises to the cytoplasm. The enzyme catalyses tRNA(Asx) + L-aspartate + ATP = L-aspartyl-tRNA(Asx) + AMP + diphosphate. In terms of biological role, aspartyl-tRNA synthetase with relaxed tRNA specificity since it is able to aspartylate not only its cognate tRNA(Asp) but also tRNA(Asn). Reaction proceeds in two steps: L-aspartate is first activated by ATP to form Asp-AMP and then transferred to the acceptor end of tRNA(Asp/Asn). This Hydrogenobaculum sp. (strain Y04AAS1) protein is Aspartate--tRNA(Asp/Asn) ligase.